The following is an 835-amino-acid chain: BCL11 transcription factor A (835 aa).

Residues 1 to 12 (MSRRKQGKPQHL) are compositionally biased toward basic residues. The interval 1–41 (MSRRKQGKPQHLSKREFSPEPLEAILTDDEPDHGPLGAPEG) is disordered. Residues 1-210 (MSRRKQGKPQ…SEHGSPLTPR (210 aa)) form a required for nuclear body formation and for SUMO1 recruitment region. A C2HC-type zinc finger spans residues 45–71 (LLTCGQCQMNFPLGDILIFIEHKRKQC). Residues cysteine 48, cysteine 51, histidine 66, and cysteine 71 each coordinate Zn(2+). Serine 86 carries the post-translational modification Phosphoserine. Lysine 123 is covalently cross-linked (Glycyl lysine isopeptide (Lys-Gly) (interchain with G-Cter in SUMO2)). Isoleucine 162 carries the phosphothreonine modification. Lysine 164 is covalently cross-linked (Glycyl lysine isopeptide (Lys-Gly) (interchain with G-Cter in SUMO2)). The C2H2-type 1 zinc finger occupies 170–193 (YTCTTCKQPFTSAWFLLQHAQNTH). The residue at position 205 (serine 205) is a Phosphoserine. Residue proline 214 is modified to Phosphothreonine. Arginine 271 carries the asymmetric dimethylarginine modification. Residues 323–376 (AGNTSSPPLSPGRPSPMQRLLQPFQPGSKPPFLATPPLPPLQSAPPPSQPPVKS) form a disordered region. Residues serine 332 and serine 337 each carry the phosphoserine modification. A compositionally biased stretch (pro residues) spans 355–372 (LATPPLPPLQSAPPPSQP). C2H2-type zinc fingers lie at residues 377–399 (KSCE…RRSH) and 405–429 (YKCN…THMH). A compositionally biased stretch (basic residues) spans 421–430 (KRHMKTHMHK). Disordered stretches follow at residues 421-458 (KRHM…LVGS), 471-512 (KSEN…ERVD), and 572-619 (RSHL…GLSK). The span at 441–450 (GLSTASSPEP) shows a compositional bias: polar residues. A phosphoserine mark is found at serine 446 and serine 447. The span at 482 to 506 (NGDEEEEEDDEEEEEEEEEEEEELT) shows a compositional bias: acidic residues. Positions 574 to 584 (HLAEAEGHRDT) are enriched in basic and acidic residues. Phosphoserine is present on serine 608. A Glycyl lysine isopeptide (Lys-Gly) (interchain with G-Cter in SUMO2) cross-link involves residue lysine 620. Phosphoserine is present on residues serine 625 and serine 630. A Glycyl lysine isopeptide (Lys-Gly) (interchain with G-Cter in SUMO1) cross-link involves residue lysine 634. The span at 682–696 (SPFASSSEHSSENGS) shows a compositional bias: low complexity. A Phosphothreonine modification is found at threonine 701. Residues 706-720 (LDGGISGRSGTGSGG) show a composition bias toward gly residues. The DNA-binding stretch occupies residues 737–835 (EGRRSDTCEY…RVLNNDIKTE (99 aa)). Residues 742 to 764 (DTCEYCGKVFKNCSNLTVHRRSH) form a C2H2-type 4 zinc finger. Residues cysteine 744, cysteine 747, histidine 760, and histidine 764 each contribute to the Zn(2+) site. Residues 764–773 (HTGERPYKCE) show a composition bias toward polar residues. The tract at residues 765-769 (TGERP) is disordered. A C2H2-type 5 zinc finger spans residues 770–792 (YKCELCNYACAQSSKLTRHMKTH). Residues cysteine 772, cysteine 775, histidine 788, and histidine 792 each contribute to the Zn(2+) site. Positions 793-799 (GQVGKDV) are disordered. Residues 800-823 (YKCEICKMPFSVYSTLEKHMKKWH) form a C2H2-type 6 zinc finger. Residues cysteine 802, cysteine 805, histidine 818, and histidine 823 each contribute to the Zn(2+) site.

In terms of assembly, homotetrameric; self-associates via C2HC-type zinc finger domain. Interacts with MTA2, a component of the nucleosome remodeling and deacetylase (NuRD) repressor complex. Interacts with NR2F1, PIAS3, NR2F2 and NR2F6. Interacts with TBR1. Sumoylated with SUMO1. Isoforms are expressed in a tissue-specific fashion. Isoforms 1, isoform 2, and isoform 3 are expressed at similar levels in testis, kidney and spleen. Isoform 1 is expressed in the stomach, and isoform 2 is expressed exclusively in the lung. Overexpression following proviral integration in hematopoietic cells results in the generation of myeloid leukemia.

Its subcellular location is the cytoplasm. The protein localises to the nucleus. Transcription factor. Associated with the BAF SWI/SNF chromatin remodeling complex. Binds to the 5'-TGACCA-3' sequence motif in regulatory regions of target genes. Involved in brain development. May play a role in hematopoiesis. Essential factor in lymphopoiesis, required for B-cell formation in fetal liver. May function as a modulator of the transcriptional repression activity of NR2F2. This is BCL11 transcription factor A (Bcl11a) from Mus musculus (Mouse).